We begin with the raw amino-acid sequence, 259 residues long: Proteasome subunit alpha (259 aa).

The protein belongs to the peptidase T1A family. In terms of assembly, the 20S proteasome core is composed of 14 alpha and 14 beta subunits that assemble into four stacked heptameric rings, resulting in a barrel-shaped structure. The two inner rings, each composed of seven catalytic beta subunits, are sandwiched by two outer rings, each composed of seven alpha subunits. The catalytic chamber with the active sites is on the inside of the barrel. Has a gated structure, the ends of the cylinder being occluded by the N-termini of the alpha-subunits. Is capped at one or both ends by the proteasome regulatory ATPase, PAN.

The protein resides in the cytoplasm. The formation of the proteasomal ATPase PAN-20S proteasome complex, via the docking of the C-termini of PAN into the intersubunit pockets in the alpha-rings, triggers opening of the gate for substrate entry. Interconversion between the open-gate and close-gate conformations leads to a dynamic regulation of the 20S proteasome proteolysis activity. Its function is as follows. Component of the proteasome core, a large protease complex with broad specificity involved in protein degradation. The sequence is that of Proteasome subunit alpha from Methanococcus maripaludis (strain DSM 14266 / JCM 13030 / NBRC 101832 / S2 / LL).